The chain runs to 283 residues: Pantothenate synthetase (283 aa).

30–37 is a binding site for ATP; it reads MGNLHQGH. Catalysis depends on histidine 37, which acts as the Proton donor. Glutamine 61 is a (R)-pantoate binding site. Position 61 (glutamine 61) interacts with beta-alanine. 149–152 is a binding site for ATP; it reads GEKD. Glutamine 155 lines the (R)-pantoate pocket. ATP-binding positions include valine 178 and 186-189; that span reads FSSR.

It belongs to the pantothenate synthetase family. As to quaternary structure, homodimer.

It is found in the cytoplasm. The enzyme catalyses (R)-pantoate + beta-alanine + ATP = (R)-pantothenate + AMP + diphosphate + H(+). It functions in the pathway cofactor biosynthesis; (R)-pantothenate biosynthesis; (R)-pantothenate from (R)-pantoate and beta-alanine: step 1/1. Catalyzes the condensation of pantoate with beta-alanine in an ATP-dependent reaction via a pantoyl-adenylate intermediate. The polypeptide is Pantothenate synthetase (Proteus mirabilis (strain HI4320)).